A 77-amino-acid polypeptide reads, in one-letter code: Translational regulator CsrA (77 aa).

The protein belongs to the CsrA/RsmA family. Homodimer; the beta-strands of each monomer intercalate to form a hydrophobic core, while the alpha-helices form wings that extend away from the core.

The protein resides in the cytoplasm. In terms of biological role, a translational regulator that binds mRNA to regulate translation initiation and/or mRNA stability. Usually binds in the 5'-UTR at or near the Shine-Dalgarno sequence preventing ribosome-binding, thus repressing translation. Its main target seems to be the major flagellin gene, while its function is anatagonized by FliW. The sequence is that of Translational regulator CsrA from Pseudarthrobacter chlorophenolicus (strain ATCC 700700 / DSM 12829 / CIP 107037 / JCM 12360 / KCTC 9906 / NCIMB 13794 / A6) (Arthrobacter chlorophenolicus).